Reading from the N-terminus, the 445-residue chain is MREILHIQGGQCGNQIGAKFWEVVCAEHGIDSTGRYGGDSELQLERINVYYNEASCGRFVPRAVLMDLEPGTMDSVRSGPYGQIFRPDNFVFGQSGAGNNWAKGHYTEGAELIDSVLDVVRKEAENCDCLQGFQVCHSLGGGTGSGMGTLLISKIREEYPDRTMLTFSVFPSPKVSDTVVEPYNATLSVHQLVENADECMVLDNEALYDICFRTLKLTTPSFGDLNHLISATMSGVTCCLRFPGQLNSDLRKLAVNLIPFPRLHFFMVGFAPLTSRGSQQYRALTVPELTQQMWDAKNMVCAADPRHGRYLTASAVFRGKMSTKEVDEQMINVQNKNSSYFVEWIPNNVKSTVCDIPPIGLKMASTFIGNSTSIQEMFRRVSEQFTAMFRRKAFLHWYTGEGMDEMEFTEAESDMNDLVSEYQQYQDATADDEEYEEEEEYEAEA.

Q11, E69, S138, G142, T143, G144, N204, and N226 together coordinate GTP. E69 contacts Mg(2+). A disordered region spans residues 423–445 (QQYQDATADDEEYEEEEEYEAEA). The span at 429 to 445 (TADDEEYEEEEEYEAEA) shows a compositional bias: acidic residues.

It belongs to the tubulin family. Dimer of alpha and beta chains. A typical microtubule is a hollow water-filled tube with an outer diameter of 25 nm and an inner diameter of 15 nM. Alpha-beta heterodimers associate head-to-tail to form protofilaments running lengthwise along the microtubule wall with the beta-tubulin subunit facing the microtubule plus end conferring a structural polarity. Microtubules usually have 13 protofilaments but different protofilament numbers can be found in some organisms and specialized cells. Mg(2+) serves as cofactor.

It localises to the cytoplasm. The protein localises to the cytoskeleton. Its function is as follows. Tubulin is the major constituent of microtubules, a cylinder consisting of laterally associated linear protofilaments composed of alpha- and beta-tubulin heterodimers. Microtubules grow by the addition of GTP-tubulin dimers to the microtubule end, where a stabilizing cap forms. Below the cap, tubulin dimers are in GDP-bound state, owing to GTPase activity of alpha-tubulin. The polypeptide is Tubulin beta-9 chain (Gossypium hirsutum (Upland cotton)).